We begin with the raw amino-acid sequence, 257 residues long: Outer membrane protein Omp26La (257 aa).

An N-terminal signal peptide occupies residues 1–19 (MKKIALFITASLIAGNTLA).

It belongs to the MipA/OmpV family.

It is found in the cell outer membrane. The protein is Outer membrane protein Omp26La of Vibrio anguillarum (Listonella anguillarum).